Reading from the N-terminus, the 126-residue chain is Holo-[acyl-carrier-protein] synthase (126 aa).

Mg(2+) is bound by residues Asp-9 and Glu-58.

Belongs to the P-Pant transferase superfamily. AcpS family. It depends on Mg(2+) as a cofactor.

Its subcellular location is the cytoplasm. It catalyses the reaction apo-[ACP] + CoA = holo-[ACP] + adenosine 3',5'-bisphosphate + H(+). Its function is as follows. Transfers the 4'-phosphopantetheine moiety from coenzyme A to a Ser of acyl-carrier-protein. The protein is Holo-[acyl-carrier-protein] synthase of Shewanella denitrificans (strain OS217 / ATCC BAA-1090 / DSM 15013).